Consider the following 239-residue polypeptide: Ribonuclease 3 (239 aa).

The RNase III domain maps to 12–137 (RAKLESLIGH…LIAAIYLDGG (126 aa)). Residue glutamate 50 coordinates Mg(2+). The active site involves aspartate 54. Residues aspartate 123 and glutamate 126 each coordinate Mg(2+). Glutamate 126 is an active-site residue. A DRBM domain is found at 162–231 (DAKTELQEWS…ATKMLEREGI (70 aa)).

It belongs to the ribonuclease III family. In terms of assembly, homodimer. Mg(2+) serves as cofactor.

The protein resides in the cytoplasm. The enzyme catalyses Endonucleolytic cleavage to 5'-phosphomonoester.. Digests double-stranded RNA. Involved in the processing of primary rRNA transcript to yield the immediate precursors to the large and small rRNAs (23S and 16S). Processes some mRNAs, and tRNAs when they are encoded in the rRNA operon. Processes pre-crRNA and tracrRNA of type II CRISPR loci if present in the organism. The polypeptide is Ribonuclease 3 (Rhizobium etli (strain CIAT 652)).